The primary structure comprises 178 residues: Fatty-acid and retinol-binding protein 1 (178 aa).

A signal peptide spans 1 to 16; that stretch reads MYHQLILMALIGVIMA. Coiled-coil stretches lie at residues 67–89 and 122–154; these read DAALEALKNKSDKLYQKAVELRN and QKLDMEKLKQAARDIIAKYEALNEETKEELKAT.

Belongs to the fatty-acid and retinol-binding protein (FARBP) family. In terms of processing, not glycosylated.

It localises to the secreted. In terms of biological role, binds retinol and different fatty acids. This chain is Fatty-acid and retinol-binding protein 1, found in Litomosoides sigmodontis (Filarial nematode worm).